Reading from the N-terminus, the 384-residue chain is 5-cytosine rRNA methyltransferase NSUN4 (384 aa).

Residues 1–25 (MAALVVRGVRDMLKRADFATVPRRQ) constitute a mitochondrion transit peptide. Positions 185, 186, 187, and 204 each coordinate S-adenosyl-L-methionine. S206 carries the phosphoserine modification. Positions 209, 237, 238, and 255 each coordinate S-adenosyl-L-methionine. The active-site Nucleophile is C310.

The protein belongs to the class I-like SAM-binding methyltransferase superfamily. RsmB/NOP family. As to quaternary structure, heterodimer with MTERFD2/MTERF4; this interaction seems to be required for NSUN4 recruitment to the mitochondrial large ribosomal subunit.

It is found in the mitochondrion. It carries out the reaction a cytidine in rRNA + S-adenosyl-L-methionine = a 5-methylcytidine in rRNA + S-adenosyl-L-homocysteine + H(+). The catalysed reaction is a cytidine in mRNA + S-adenosyl-L-methionine = a 5-methylcytidine in mRNA + S-adenosyl-L-homocysteine + H(+). Mitochondrial RNA cytosine C(5)-methyltransferase that methylates cytosine to 5-methylcytosine (m5C) in various RNAs, such as rRNAs, mRNAs and some long non-coding RNAs (lncRNAs). Involved in mitochondrial ribosome small subunit (SSU) maturation by catalyzing methylation of mitochondrial 12S rRNA; the function is independent of MTERFD2/MTERF4 and assembled mitochondrial ribosome large subunit (LSU). Targeted to LSU by MTERFD2/MTERF4 and probably is involved in a final step in ribosome biogenesis to ensure that SSU and LSU are assembled. In vitro can methylate 16S rRNA of the LSU; the methylation is enhanced by MTERFD/MTERF4. Also acts as a regulator of innate immunity by marking double-stranded mitochondrial RNAs(mt-dsRNAs) generated in response to stress: catalyzes m5C modification on mitochondrial RNAs, such as a mRNAs and lncRNAs, with a preference for the termini of light-strand lncRNAs, promoting their degradation and cytosolic release. Modified light-strand lncRNAs are then recognized by C1QBP reader and recruited to the mitochondrial degradosome complex, which promotes their degradation. The chain is 5-cytosine rRNA methyltransferase NSUN4 (NSUN4) from Bos taurus (Bovine).